The sequence spans 485 residues: Lysine--tRNA ligase (485 aa).

Residues E391 and E398 each coordinate Mg(2+).

It belongs to the class-II aminoacyl-tRNA synthetase family. As to quaternary structure, homodimer. It depends on Mg(2+) as a cofactor.

It is found in the cytoplasm. The catalysed reaction is tRNA(Lys) + L-lysine + ATP = L-lysyl-tRNA(Lys) + AMP + diphosphate. This chain is Lysine--tRNA ligase, found in Blochmanniella floridana.